The chain runs to 379 residues: Cytochrome b (379 aa).

A run of 4 helical transmembrane segments spans residues 33–53 (FGSLLGMCLVIQILTGLFLAM), 77–98 (WLIRYLHANGASMFFICLFIHV), 113–133 (WNIGIILFLTTMATAFVGYVL), and 178–198 (FFAFHFILPFIIAAFALVHLL). Heme b is bound by residues H83 and H97. Heme b-binding residues include H182 and H196. H201 is a binding site for a ubiquinone. 4 consecutive transmembrane segments (helical) span residues 226–246 (IKDLLGIFLLLLVLMILTLFF), 288–308 (LGGVLALILSILILAAFPLLN), 320–340 (VTQVIYWIFIANLLVLTWIGG), and 347–367 (FTMIGQIASITYFAIIIILIP).

Belongs to the cytochrome b family. As to quaternary structure, the cytochrome bc1 complex contains 11 subunits: 3 respiratory subunits (MT-CYB, CYC1 and UQCRFS1), 2 core proteins (UQCRC1 and UQCRC2) and 6 low-molecular weight proteins (UQCRH/QCR6, UQCRB/QCR7, UQCRQ/QCR8, UQCR10/QCR9, UQCR11/QCR10 and a cleavage product of UQCRFS1). This cytochrome bc1 complex then forms a dimer. Heme b is required as a cofactor.

It is found in the mitochondrion inner membrane. Component of the ubiquinol-cytochrome c reductase complex (complex III or cytochrome b-c1 complex) that is part of the mitochondrial respiratory chain. The b-c1 complex mediates electron transfer from ubiquinol to cytochrome c. Contributes to the generation of a proton gradient across the mitochondrial membrane that is then used for ATP synthesis. This chain is Cytochrome b (MT-CYB), found in Akodon subfuscus (Puno grass mouse).